The following is a 444-amino-acid chain: Protein kinase C and casein kinase substrate in neurons protein 1 (444 aa).

Serine 2 and serine 79 each carry phosphoserine. The F-BAR domain maps to 13-283 (EETTDSFWEV…AIRGADAQED (271 aa)). Residues 26–275 (KRTVKRIDDG…HVYRELEQAI (250 aa)) are a coiled coil. Disordered regions lie at residues 173–194 (REMN…LQDK) and 309–386 (LPHT…DDSK). Threonine 184 bears the Phosphothreonine mark. A compositionally biased stretch (basic and acidic residues) spans 314–324 (TKKEKQPKKAE). Residues 329–351 (TNATGAVESTSQAGDRGSVSSYD) show a composition bias toward polar residues. Serine 346, serine 348, serine 349, serine 361, and serine 365 each carry phosphoserine. The SH3 domain occupies 385–444 (SKGVRVRALYDYDGQEQDELSFKAGDELTKLGEEDEQGWCRGRLDSGQLGLYPANYVEAI). Tyrosine 394 carries the post-translational modification Phosphotyrosine. Residues serine 405 and serine 430 each carry the phosphoserine modification.

This sequence belongs to the PACSIN family. In terms of assembly, homodimer. May form heterooligomers with other PACSINs. Interacts with both COBL and DBNL. Identified in a complex composed of COBL, PACSIN1 and WASL. Interacts (via SH3 domain) with SYNJ1 and WASL. Interacts (via SH3 domain) with DNM1; the interaction is reduced by DNM1 phosphorylation. Interacts with DNM2 and DNM3. Interacts with MAPT. Interacts with EHD1 and EHD3. Interacts with TRPV4. In terms of processing, phosphorylated by casein kinase 2 (CK2) and protein kinase C (PKC).

The protein resides in the cytoplasm. The protein localises to the cell projection. Its subcellular location is the synapse. It is found in the synaptosome. It localises to the ruffle membrane. The protein resides in the membrane. The protein localises to the cytoplasmic vesicle membrane. Its subcellular location is the cytosol. It is found in the cell membrane. Functionally, binds to membranes via its F-BAR domain and mediates membrane tubulation. Plays a role in the reorganization of the microtubule cytoskeleton via its interaction with MAPT; this decreases microtubule stability and inhibits MAPT-induced microtubule polymerization. Plays a role in cellular transport processes by recruiting DNM1, DNM2 and DNM3 to membranes. Plays a role in the reorganization of the actin cytoskeleton and in neuron morphogenesis via its interaction with COBL and WASL, and by recruiting COBL to the cell cortex. Plays a role in the regulation of neurite formation, neurite branching and the regulation of neurite length. Required for normal synaptic vesicle endocytosis; this process retrieves previously released neurotransmitters to accommodate multiple cycles of neurotransmission. Required for normal excitatory and inhibitory synaptic transmission. The sequence is that of Protein kinase C and casein kinase substrate in neurons protein 1 (Pacsin1) from Pongo abelii (Sumatran orangutan).